The sequence spans 284 residues: Non-selective voltage-gated ion channel VDAC3 (284 aa).

Cysteine 2 carries the post-translational modification N-acetylcysteine. Residue threonine 4 is modified to Phosphothreonine. Residues lysine 12, lysine 15, and lysine 20 each carry the N6-acetyllysine modification. Beta stranded transmembrane passes span 26 to 35 and 39 to 48; these read MVKIDLKTKS and VMEFSTSGHA. A Glycyl lysine isopeptide (Lys-Gly) (interchain with G-Cter in ubiquitin) cross-link involves residue lysine 54. The next 3 membrane-spanning stretches (beta stranded) occupy residues 55-65, 70-77, and 81-90; these read ASGNLETKYKV, LTFTQKWN, and TLGTEISWEN. N6-acetyllysine is present on lysine 91. A beta stranded membrane pass occupies residues 96-105; it reads LKLTLDTIFV. Glycyl lysine isopeptide (Lys-Gly) (interchain with G-Cter in ubiquitin) cross-links involve residues lysine 110 and lysine 111. 10 consecutive transmembrane segments (beta stranded) span residues 112 to 121, 124 to 131, 138 to 146, 151 to 159, 164 to 176, 179 to 186, 190 to 199, 203 to 212, 219 to 228, and 232 to 239; these read SGKLKASYKR, FSVGSNVD, TIYGWAVLA, LAGYQMSFD, KLSQ…GYKA, FQLHTHVN, EFGGSIYQKV, IETSINLAWT, RFGIAAKYML, and TSLSAKVN. Position 242 is a phosphoserine (serine 242). Residues 243–245 and 261–265 each bind NAD(+); these read LIG and SALID. Transmembrane regions (beta stranded) follow at residues 243–252 and 255–264; these read LIGLGYTQTL and GVKLTLSALI. Lysine 267 is subject to N6-acetyllysine; alternate. A Glycyl lysine isopeptide (Lys-Gly) (interchain with G-Cter in ubiquitin); alternate cross-link involves residue lysine 267. The beta stranded transmembrane segment at 274-283 threads the bilayer; it reads HKVGLGFELE.

The protein belongs to the eukaryotic mitochondrial porin family. In terms of assembly, interacts with ARMC12 in a TBC1D21-dependent manner. Interacts with MISFA. In terms of processing, ubiquitinated by PRKN during mitophagy, leading to its degradation and enhancement of mitophagy. Deubiquitinated by USP30.

The protein resides in the mitochondrion outer membrane. The protein localises to the membrane. The enzyme catalyses chloride(in) = chloride(out). It catalyses the reaction K(+)(in) = K(+)(out). Non-selective voltage-gated ion channel that mediates the transport of anions and cations through the mitochondrion outer membrane and plasma membrane. Forms a high-conducting channel with a stable open state and a voltage-induced closure with a mild preference for anions over cations. Involved in male fertility and sperm mitochondrial sheath formation. The sequence is that of Non-selective voltage-gated ion channel VDAC3 from Pongo abelii (Sumatran orangutan).